A 79-amino-acid chain; its full sequence is D-alanyl carrier protein (79 aa).

A Carrier domain is found at 1-76 (MEEQVLSLLE…RVMAYVKKRV (76 aa)). Residue Ser34 is modified to O-(pantetheine 4'-phosphoryl)serine.

This sequence belongs to the DltC family. 4'-phosphopantetheine is transferred from CoA to a specific serine of apo-DCP.

It is found in the cytoplasm. Its pathway is cell wall biogenesis; lipoteichoic acid biosynthesis. Functionally, carrier protein involved in the D-alanylation of lipoteichoic acid (LTA). The loading of thioester-linked D-alanine onto DltC is catalyzed by D-alanine--D-alanyl carrier protein ligase DltA. The DltC-carried D-alanyl group is further transferred to cell membrane phosphatidylglycerol (PG) by forming an ester bond, probably catalyzed by DltD. D-alanylation of LTA plays an important role in modulating the properties of the cell wall in Gram-positive bacteria, influencing the net charge of the cell wall. In Abiotrophia defectiva (Streptococcus defectivus), this protein is D-alanyl carrier protein.